A 294-amino-acid chain; its full sequence is 4-hydroxy-tetrahydrodipicolinate synthase (294 aa).

T47 is a binding site for pyruvate. The active-site Proton donor/acceptor is Y135. K163 (schiff-base intermediate with substrate) is an active-site residue. Pyruvate is bound at residue V205.

It belongs to the DapA family. Homotetramer; dimer of dimers.

It localises to the cytoplasm. The enzyme catalyses L-aspartate 4-semialdehyde + pyruvate = (2S,4S)-4-hydroxy-2,3,4,5-tetrahydrodipicolinate + H2O + H(+). Its pathway is amino-acid biosynthesis; L-lysine biosynthesis via DAP pathway; (S)-tetrahydrodipicolinate from L-aspartate: step 3/4. Its function is as follows. Catalyzes the condensation of (S)-aspartate-beta-semialdehyde [(S)-ASA] and pyruvate to 4-hydroxy-tetrahydrodipicolinate (HTPA). The protein is 4-hydroxy-tetrahydrodipicolinate synthase of Rickettsia bellii (strain OSU 85-389).